A 208-amino-acid polypeptide reads, in one-letter code: FMN-dependent NADH:quinone oxidoreductase (208 aa).

FMN-binding positions include 17–19 (SNS), 99–102 (MWNL), and 143–146 (SRGG).

This sequence belongs to the azoreductase type 1 family. As to quaternary structure, homodimer. FMN is required as a cofactor.

The catalysed reaction is 2 a quinone + NADH + H(+) = 2 a 1,4-benzosemiquinone + NAD(+). It catalyses the reaction N,N-dimethyl-1,4-phenylenediamine + anthranilate + 2 NAD(+) = 2-(4-dimethylaminophenyl)diazenylbenzoate + 2 NADH + 2 H(+). Functionally, quinone reductase that provides resistance to thiol-specific stress caused by electrophilic quinones. In terms of biological role, also exhibits azoreductase activity. Catalyzes the reductive cleavage of the azo bond in aromatic azo compounds to the corresponding amines. This Staphylococcus aureus (strain COL) protein is FMN-dependent NADH:quinone oxidoreductase.